Reading from the N-terminus, the 178-residue chain is Interleukin-10 (178 aa).

The N-terminal stretch at 1-18 (MPGSALLCCLLLLAGVKT) is a signal peptide. N-linked (GlcNAc...) asparagine glycosylation occurs at N29. 2 cysteine pairs are disulfide-bonded: C30/C126 and C80/C132. The N-linked (GlcNAc...) asparagine glycan is linked to N134.

This sequence belongs to the IL-10 family. In terms of assembly, homodimer. Interacts with IL10RA and IL10RB.

The protein localises to the secreted. Its function is as follows. Major immune regulatory cytokine that acts on many cells of the immune system where it has profound anti-inflammatory functions, limiting excessive tissue disruption caused by inflammation. Mechanistically, IL10 binds to its heterotetrameric receptor comprising IL10RA and IL10RB leading to JAK1 and STAT2-mediated phosphorylation of STAT3. In turn, STAT3 translocates to the nucleus where it drives expression of anti-inflammatory mediators. Targets antigen-presenting cells (APCs) such as macrophages and monocytes and inhibits their release of pro-inflammatory cytokines including granulocyte-macrophage colony-stimulating factor /GM-CSF, granulocyte colony-stimulating factor/G-CSF, IL-1 alpha, IL-1 beta, IL-6, IL-8 and TNF-alpha. Also interferes with antigen presentation by reducing the expression of MHC-class II and co-stimulatory molecules, thereby inhibiting their ability to induce T cell activation. In addition, controls the inflammatory response of macrophages by reprogramming essential metabolic pathways including mTOR signaling. The polypeptide is Interleukin-10 (Il10) (Rattus norvegicus (Rat)).